A 70-amino-acid polypeptide reads, in one-letter code: Large ribosomal subunit protein bL31 (70 aa).

The protein belongs to the bacterial ribosomal protein bL31 family. Type A subfamily. As to quaternary structure, part of the 50S ribosomal subunit.

Binds the 23S rRNA. The protein is Large ribosomal subunit protein bL31 of Chlorobium chlorochromatii (strain CaD3).